Reading from the N-terminus, the 381-residue chain is MAKRDYYEVLGVSKNATKDEIKKAYRKLSKQYHPDINKAPDAAEKFKEIKEAYEVLSDDEKRARYDRFGHADPNEAFGGGFQGGGFDFGGFSGFGGFEDIFETFFGGGSRRRASGPRKGADLEYMMTLTFEEAAFGKETEIEVPHEETCDTCHGSGAKPGTSPQSCPHCHGSGQVTSEQATPFGRIVNRRTCPVCGGTGRHIPEKCPTCGGTGHVKKRKKIHVKIPAGVDDGQQLRVAGKGEPGVNGGPPGDLYIIFRVQPHEFFKRDGDDIYCEVPLSFAQAALGDEIEVPTLHGDVKLKIPAGTQTGTRFRLKGKGVPNVRGYGQGDQHVIVRVVTPTKLTEKQKQLLREFDRLGGETMHDGSHGRFFEKVKKAFKGET.

The 65-residue stretch at 5–69 (DYYEVLGVSK…EKRARYDRFG (65 aa)) folds into the J domain. The CR-type zinc finger occupies 136-218 (GKETEIEVPH…CGGTGHVKKR (83 aa)). Residues Cys-149, Cys-152, Cys-166, Cys-169, Cys-192, Cys-195, Cys-206, and Cys-209 each contribute to the Zn(2+) site. CXXCXGXG motif repeat units lie at residues 149-156 (CDTCHGSG), 166-173 (CPHCHGSG), 192-199 (CPVCGGTG), and 206-213 (CPTCGGTG). Positions 154-174 (GSGAKPGTSPQSCPHCHGSGQ) are disordered.

It belongs to the DnaJ family. In terms of assembly, homodimer. Zn(2+) serves as cofactor.

Its subcellular location is the cytoplasm. Its function is as follows. Participates actively in the response to hyperosmotic and heat shock by preventing the aggregation of stress-denatured proteins and by disaggregating proteins, also in an autonomous, DnaK-independent fashion. Unfolded proteins bind initially to DnaJ; upon interaction with the DnaJ-bound protein, DnaK hydrolyzes its bound ATP, resulting in the formation of a stable complex. GrpE releases ADP from DnaK; ATP binding to DnaK triggers the release of the substrate protein, thus completing the reaction cycle. Several rounds of ATP-dependent interactions between DnaJ, DnaK and GrpE are required for fully efficient folding. Also involved, together with DnaK and GrpE, in the DNA replication of plasmids through activation of initiation proteins. The sequence is that of Chaperone protein DnaJ from Geobacillus thermodenitrificans (strain NG80-2).